We begin with the raw amino-acid sequence, 204 residues long: Peptidyl-prolyl cis-trans isomerase CYP20-1 (204 aa).

An N-terminal signal peptide occupies residues 1–23 (MASSVTLLLWSLLLLGTLSAIQA). Residues 38 to 201 (YFDVEIDGKA…SKVVIVDSGE (164 aa)) form the PPIase cyclophilin-type domain.

It belongs to the cyclophilin-type PPIase family. As to quaternary structure, interacts with the PP2A A subunit PP2AA1/RCN1. Ubiquitous, mostly in aerial organs. Higher levels in leaf and buds, and lower levels in seedlings.

The protein resides in the endoplasmic reticulum. It is found in the secreted. The catalysed reaction is [protein]-peptidylproline (omega=180) = [protein]-peptidylproline (omega=0). Its activity is regulated as follows. Binds cyclosporin A (CsA). CsA mediates some of its effects via an inhibitory action on PPIase. In terms of biological role, PPIases accelerate the folding of proteins. It catalyzes the cis-trans isomerization of proline imidic peptide bonds in oligopeptides. Seems to be involved in root development. In Arabidopsis thaliana (Mouse-ear cress), this protein is Peptidyl-prolyl cis-trans isomerase CYP20-1 (CYP20-1).